The chain runs to 320 residues: Ciliary microtubule inner protein 2A (320 aa).

Belongs to the CIMIP2 family. As to quaternary structure, microtubule inner protein component of sperm flagellar doublet microtubules. Expressed in sperm.

It localises to the cytoplasm. The protein localises to the cytoskeleton. Its subcellular location is the flagellum axoneme. In terms of biological role, microtubule inner protein (MIP) part of the dynein-decorated doublet microtubules (DMTs) in flagellum axoneme. Binds to the intra-tubulin interfaces. In Bos taurus (Bovine), this protein is Ciliary microtubule inner protein 2A (CIMIP2A).